A 588-amino-acid polypeptide reads, in one-letter code: Calicin (588 aa).

Residues 28–98 (WDMALTVDHH…FYSGKVVISE (71 aa)) form the BTB domain. The BACK domain maps to 133-235 (CLRYLFLAEL…NAVSNKTLMF (103 aa)). A Phosphoserine modification is found at S149. Kelch repeat units follow at residues 280–327 (SVVI…AAGR), 328–375 (YIYI…TCGG), 377–423 (VYSV…TKGD), 425–475 (NLYI…SFHQ), 476–525 (DNIL…IGDS), and 526–580 (KVFV…LAKL).

In terms of assembly, interacts with CYLC1; the interaction may be relevant for proper acrosome attachment to the nuclear envelope. Expressed in testis and in spermatozoa.

The protein localises to the cytoplasm. Its subcellular location is the cytoskeleton. It localises to the perinuclear theca. The protein resides in the calyx. In terms of biological role, required for both nuclear and acrosomal shaping during spermiogenesis. The chain is Calicin (Ccin) from Mus musculus (Mouse).